The primary structure comprises 202 residues: Outer-membrane lipoprotein LolB (202 aa).

A signal peptide spans 1–24; it reads MESKEQHLIRQYFILAMFFLFLAG. The N-palmitoyl cysteine moiety is linked to residue C25. C25 carries S-diacylglycerol cysteine lipidation.

It belongs to the LolB family. As to quaternary structure, monomer.

It localises to the cell outer membrane. Functionally, plays a critical role in the incorporation of lipoproteins in the outer membrane after they are released by the LolA protein. This Pseudoalteromonas translucida (strain TAC 125) protein is Outer-membrane lipoprotein LolB.